Reading from the N-terminus, the 340-residue chain is KRR1 small subunit processome component homolog (340 aa).

Positions 124–192 (DIIKIGNLVH…VRDIVLETMN (69 aa)) constitute a KH domain. Residues 228–244 (KNKNISKRKQPKSKKPK) show a composition bias toward basic residues. 2 disordered regions span residues 228–259 (KNKN…ESKI) and 271–324 (NQEQ…KVDV). Residues 269 to 302 (FLNQEQKQAKRNQERSAKQADAAKKQDERRNKDF) are a coiled coil. 2 stretches are compositionally biased toward basic and acidic residues: residues 275–301 (KQAK…RNKD) and 309–324 (APSR…KVDV).

It belongs to the KRR1 family. Monomer. Component of the ribosomal small subunit (SSU) processome.

It localises to the nucleus. The protein localises to the nucleolus. Required for 40S ribosome biogenesis. Involved in nucleolar processing of pre-18S ribosomal RNA and ribosome assembly. Binds to RNA. Required for female germline development, cell viability during eye development and for survival of dividing cells and epithelial cells during early wing disk development. The protein is KRR1 small subunit processome component homolog of Drosophila persimilis (Fruit fly).